Here is an 844-residue protein sequence, read N- to C-terminus: Translation initiation factor IF-2 (844 aa).

Residues 120-132 are compositionally biased toward polar residues; sequence RNSVNLVQPQQEK. The segment at 120–220 is disordered; it reads RNSVNLVQPQ…SGKGFKKANP (101 aa). Over residues 161–175 the composition is skewed to basic and acidic residues; it reads DEEKSSEDKSTESKN. Positions 205–219 are enriched in basic residues; it reads SKAKKASGKGFKKAN. The tr-type G domain occupies 343–510; it reads SRAPVVTIMG…AVLLQSEVLE (168 aa). The G1 stretch occupies residues 352–359; it reads GHVDHGKT. A GTP-binding site is contributed by 352 to 359; the sequence is GHVDHGKT. The tract at residues 377–381 is G2; sequence GITQH. The segment at 398–401 is G3; that stretch reads DTPG. GTP contacts are provided by residues 398–402 and 452–455; these read DTPGH and NKID. Positions 452 to 455 are G4; the sequence is NKID. Residues 488-490 are G5; it reads SAK.

It belongs to the TRAFAC class translation factor GTPase superfamily. Classic translation factor GTPase family. IF-2 subfamily.

The protein resides in the cytoplasm. One of the essential components for the initiation of protein synthesis. Protects formylmethionyl-tRNA from spontaneous hydrolysis and promotes its binding to the 30S ribosomal subunits. Also involved in the hydrolysis of GTP during the formation of the 70S ribosomal complex. In Francisella philomiragia subsp. philomiragia (strain ATCC 25017 / CCUG 19701 / FSC 153 / O#319-036), this protein is Translation initiation factor IF-2.